The chain runs to 516 residues: Probable malate:quinone oxidoreductase (516 aa).

It belongs to the MQO family. It depends on FAD as a cofactor.

The catalysed reaction is (S)-malate + a quinone = a quinol + oxaloacetate. The protein operates within carbohydrate metabolism; tricarboxylic acid cycle; oxaloacetate from (S)-malate (quinone route): step 1/1. This chain is Probable malate:quinone oxidoreductase, found in Mycobacterium sp. (strain MCS).